The primary structure comprises 309 residues: Homoserine kinase (309 aa).

91 to 101 (PIGSGLGSSAC) contacts ATP.

This sequence belongs to the GHMP kinase family. Homoserine kinase subfamily.

It is found in the cytoplasm. It catalyses the reaction L-homoserine + ATP = O-phospho-L-homoserine + ADP + H(+). Its pathway is amino-acid biosynthesis; L-threonine biosynthesis; L-threonine from L-aspartate: step 4/5. Functionally, catalyzes the ATP-dependent phosphorylation of L-homoserine to L-homoserine phosphate. The sequence is that of Homoserine kinase from Serratia proteamaculans (strain 568).